The chain runs to 726 residues: Pyrroloquinoline quinone-dependent pyranose dehydrogenase (726 aa).

The signal sequence occupies residues 1–18 (MRSSSLAWALGLVALANA). The heme b site is built by methionine 83 and tyrosine 108. The cysteines at positions 138 and 141 are disulfide-linked. The N-linked (GlcNAc...) asparagine glycan is linked to asparagine 140. Heme b contacts are provided by arginine 181 and histidine 182. The segment at 211–242 (PPLSGGAPTQPPTQQPPTTTAPPPPPPSSTFV) is disordered. The segment covering 219–238 (TQPPTQQPPTTTAPPPPPPS) has biased composition (pro residues). Residues cysteine 244 and cysteine 302 are joined by a disulfide bond. Pyrroloquinoline quinone-binding residues include arginine 273, histidine 363, arginine 430, and asparagine 431. Residues serine 449 and aspartate 451 each contribute to the Ca(2+) site. An intrachain disulfide couples cysteine 492 to cysteine 525. Histidine 539 is a pyrroloquinoline quinone binding site. Asparagine 551 is a glycosylation site (N-linked (GlcNAc...) asparagine). Pyrroloquinoline quinone is bound by residues histidine 560, tryptophan 563, and asparagine 564. Cysteine 611 and cysteine 619 are joined by a disulfide. Arginine 621 lines the pyrroloquinoline quinone pocket. The segment covering 659 to 678 (ITQPPITTSPPTPTTPPVVQ) has biased composition (pro residues). The segment at 659–689 (ITQPPITTSPPTPTTPPVVQPPTTVAPPQAS) is disordered. Low complexity predominate over residues 679–689 (PPTTVAPPQAS). The CBM1 domain occupies 688–724 (ASQTLWGQCGGQGWTGPTLCPANSVCRESNQWYSQCV).

It belongs to the sugar dehydrogenase AA12 family. It depends on Ca(2+) as a cofactor. The cofactor is pyrroloquinoline quinone. Heme b serves as cofactor.

It localises to the secreted. Functionally, pyrroloquinoline quinone (PPQ)-dependent oxidoreductase that catalyzes the oxidation of various sugars including L-galactose, L-gulose, D-talose, D-arabinose, D-lyxose, L-fucose and D-glucosone. Shows significant activity toward the reverse-chair conformation of pyranoses. Shows little or no activity toward abundant sugars such as D-glucose, D-fructose, cellobiose, as well L-xylose and L-glucose. This enzyme is able to direct electrical communication with electrodes, without artificial electron mediators, thus allowing direct electron transfer (DET)-type bioelectrocatalysis. Exhibits binding affinity for insoluble cellulose. PDH does not oxidize cello-oligosaccharides but is able to activate the C-1-oxidizing Neurospora crassa LPMO9F and the C-4-oxidizing Neurospora crassa LPMO9C thanks to the electron-tranfer activity of the cytochrome domain and the localization of PDH in the vicinity of the LPMO substrates by the CBM1 domain. The polypeptide is Pyrroloquinoline quinone-dependent pyranose dehydrogenase (Coprinopsis cinerea (strain Okayama-7 / 130 / ATCC MYA-4618 / FGSC 9003) (Inky cap fungus)).